The sequence spans 101 residues: Apolipoprotein C-II (101 aa).

An N-terminal signal peptide occupies residues 1–22 (MGIRYLLVLVLVLLVLGCEVQG). The interval 66–74 (TMDEKIREI) is lipid binding. The lipoprotein lipase cofactor stretch occupies residues 78–101 (STAAVSTYAGIFTDQLLSMLKGDQ).

It belongs to the apolipoprotein C2 family. Proapolipoprotein C-II is synthesized as a sialic acid containing glycoprotein which is subsequently desialylated prior to its proteolytic processing. Post-translationally, proapolipoprotein C-II, the major form found in plasma undergoes proteolytic cleavage of its N-terminal hexapeptide to generate apolipoprotein C-II, which occurs as the minor form in plasma.

It localises to the secreted. Component of chylomicrons, very low-density lipoproteins (VLDL), low-density lipoproteins (LDL), and high-density lipoproteins (HDL) in plasma. Plays an important role in lipoprotein metabolism as an activator of lipoprotein lipase. Both proapolipoprotein C-II and apolipoprotein C-II can activate lipoprotein lipase. The polypeptide is Apolipoprotein C-II (APOC2) (Leptonychotes weddellii (Weddell seal)).